The sequence spans 134 residues: uncharacterized protein (134 aa).

The interval 59-92 (VSKPKRRSPHPHGNKAADKRKTTEKEPERKKRVG) is disordered. Positions 61 to 71 (KPKRRSPHPHG) are enriched in basic residues. Over residues 73–87 (KAADKRKTTEKEPER) the composition is skewed to basic and acidic residues.

This is an uncharacterized protein from Saccharomyces cerevisiae (strain ATCC 204508 / S288c) (Baker's yeast).